The following is a 309-amino-acid chain: uncharacterized protein (309 aa).

The tat-type signal signal peptide spans 1–32; it reads MTGTAPVSRRQYLGTAGAIIGTTAGCLTGADA.

Belongs to the bacterial solute-binding protein 1 family. WtpA subfamily. Post-translationally, predicted to be exported by the Tat system. The position of the signal peptide cleavage has not been experimentally proven.

This is an uncharacterized protein from Halobacterium salinarum (strain ATCC 700922 / JCM 11081 / NRC-1) (Halobacterium halobium).